Here is a 204-residue protein sequence, read N- to C-terminus: Pantothenate transporter PanT (204 aa).

The next 6 membrane-spanning stretches (helical) occupy residues 18-38, 39-59, 63-83, 86-106, 123-143, and 176-196; these read IILL…AVIV, GAQP…LGAR, FIGG…PGSI, LMFQ…LIIG, LGLG…VVLL, and IFEI…LVPI.

In E.coli forms a stable energy-coupling factor (ECF) transporter complex probably composed of a membrane-embedded substrate-binding protein (S component), two ATP-binding proteins (A components) and a transmembrane protein (T component).

The protein localises to the cell membrane. Functionally, probable pantothenate-binding protein that interacts with the energy-coupling factor (ECF) ABC-transporter complex. Unlike classic ABC transporters this ECF transporter provides the energy necessary to transport a number of different substrates. The substrates themselves are bound by transmembrane, not extracytoplasmic soluble proteins and transport it into cells. Upon coexpression with its energy-coupling factor (ECF) ABC-transporter complex EcfA1A2T in E.coli allows pantothenate uptake; uptake requires both PanT and EcfA1A2T. This Leuconostoc mesenteroides subsp. mesenteroides (strain ATCC 8293 / DSM 20343 / BCRC 11652 / CCM 1803 / JCM 6124 / NCDO 523 / NBRC 100496 / NCIMB 8023 / NCTC 12954 / NRRL B-1118 / 37Y) protein is Pantothenate transporter PanT (panT).